The following is a 415-amino-acid chain: MKSDSEGHKSSSKIQIHKGKILLKPRSWVNLGYSIANSEKETFFLKNAIPGETVDTVLLKRSGSLFWGVASEIQEVSSERIPSDCSIFPRCGGCSYRHVSYQKELEIKKFLLQETLEHFLSKKHIQIPEIEILSGDPNGYRNTAQIQLGFAGNQRLAGFYEEFSHSIVNLPEEGCKNLPQEMNFAFAEFLKQEVKGSKQILKSKTLSFRLEGTKVISYKKKSVSFSENIRIPELKRIVWEIPAGGFSQVNRYLIAPWLEKIFELVPNNQNRILELYCGSGLIAIALKSKTTSWLGYEISSDCVQQAKRNVLLNGISSCDFKTLNLETDWIDSEEVLNSSFWIMNPPRAGLSKKVLQTLIKTSPNGFLYSSCNHTTLVRDLSLFLNKDYKLSNVTLVDFFPRTKHFEVIVKVEKKD.

[4Fe-4S] cluster-binding residues include Cys-85, Cys-91, Cys-94, and Cys-175. S-adenosyl-L-methionine contacts are provided by Gln-248, Tyr-276, Glu-297, and Asn-344. Cys-371 serves as the catalytic Nucleophile.

Belongs to the class I-like SAM-binding methyltransferase superfamily. RNA M5U methyltransferase family.

This is an uncharacterized protein from Leptospira interrogans serogroup Icterohaemorrhagiae serovar Lai (strain 56601).